The primary structure comprises 686 residues: Elongation factor G 2 (686 aa).

Residues 7 to 280 (TTVRNLGILA…AVVAYLPSPL (274 aa)) form the tr-type G domain. Residues 16–23 (AHVDAGKT), 80–84 (DTPGH), and 134–137 (NKMD) each bind GTP.

The protein belongs to the TRAFAC class translation factor GTPase superfamily. Classic translation factor GTPase family. EF-G/EF-2 subfamily.

It is found in the cytoplasm. In terms of biological role, catalyzes the GTP-dependent ribosomal translocation step during translation elongation. During this step, the ribosome changes from the pre-translocational (PRE) to the post-translocational (POST) state as the newly formed A-site-bound peptidyl-tRNA and P-site-bound deacylated tRNA move to the P and E sites, respectively. Catalyzes the coordinated movement of the two tRNA molecules, the mRNA and conformational changes in the ribosome. The protein is Elongation factor G 2 (fusB) of Streptomyces coelicolor (strain ATCC BAA-471 / A3(2) / M145).